Reading from the N-terminus, the 316-residue chain is Apolipoprotein E (316 aa).

A signal peptide spans 1 to 18; it reads MKVLWVALVVALLAGCQA. Repeat copies occupy residues 79–100, 101–122, 123–144, 145–166, 167–188, 189–210, 211–232, and 233–254. Residues 79-254 are 8 X 22 AA approximate tandem repeats; the sequence is VLMEETMKEV…RLDKMRQQLE (176 aa). Met142 carries the post-translational modification Methionine sulfoxide. At Ser146 the chain carries Phosphoserine. Positions 157-167 are LDL and other lipoprotein receptors binding; that stretch reads HLRKLRKRLLR. A heparin-binding site is contributed by 161–164; sequence LRKR. Positions 209 to 289 are lipid-binding and lipoprotein association; the sequence is AATLSTQVGQ…SWFEPLVEDM (81 aa). Position 228–235 (228–235) interacts with heparin; that stretch reads RQKLHGRL. The homooligomerization stretch occupies residues 265–316; the sequence is SQIRLQAEAFQARLRSWFEPLVEDMQRQWAGLVEKVQLALHLSPTSPPSENH. Residues 277–289 form a specificity for association with VLDL region; the sequence is RLRSWFEPLVEDM.

Belongs to the apolipoprotein A1/A4/E family. In terms of assembly, homotetramer. May interact with ABCA1; functionally associated with ABCA1 in the biogenesis of HDLs. May interact with APP/A4 amyloid-beta peptide; the interaction is extremely stable in vitro but its physiological significance is unclear. May interact with MAPT. May interact with MAP2. In the cerebrospinal fluid, interacts with secreted SORL1. Interacts with PMEL; this allows the loading of PMEL luminal fragment on ILVs to induce fibril nucleation. In terms of processing, APOE exists as multiple glycosylated and sialylated glycoforms within cells and in plasma. The extent of glycosylation and sialylation are tissue and context specific. Post-translationally, glycated in plasma VLDL. Phosphorylated by FAM20C in the extracellular medium.

It localises to the secreted. The protein resides in the extracellular space. It is found in the extracellular matrix. Its subcellular location is the extracellular vesicle. The protein localises to the endosome. It localises to the multivesicular body. APOE is an apolipoprotein, a protein associating with lipid particles, that mainly functions in lipoprotein-mediated lipid transport between organs via the plasma and interstitial fluids. APOE is a core component of plasma lipoproteins and is involved in their production, conversion and clearance. Apolipoproteins are amphipathic molecules that interact both with lipids of the lipoprotein particle core and the aqueous environment of the plasma. As such, APOE associates with chylomicrons, chylomicron remnants, very low density lipoproteins (VLDL) and intermediate density lipoproteins (IDL) but shows a preferential binding to high-density lipoproteins (HDL). It also binds a wide range of cellular receptors including the LDL receptor/LDLR and the very low-density lipoprotein receptor/VLDLR that mediate the cellular uptake of the APOE-containing lipoprotein particles. Finally, APOE also has a heparin-binding activity and binds heparan-sulfate proteoglycans on the surface of cells, a property that supports the capture and the receptor-mediated uptake of APOE-containing lipoproteins by cells. In Ovis aries (Sheep), this protein is Apolipoprotein E (APOE).